The following is a 298-amino-acid chain: Mitochondrial substrate carrier family protein N (298 aa).

Residues 1–13 (MAGDLTPSLFLKY) are Mitochondrial intermembrane-facing. 3 Solcar repeats span residues 8 to 92 (SLFL…FKKT), 104 to 188 (FRIP…TAEN), and 207 to 290 (QKLS…IKQM). Residues 14 to 34 (GFGGALSCSITHSLVVPLDVV) traverse the membrane as a helical segment. The Mitochondrial matrix portion of the chain corresponds to 35-60 (KTLLQTNPGKYTGMMNGFSTVIKEQG). The chain crosses the membrane as a helical span at residues 61 to 81 (PSGLLQGLGPTAVGYALQGFL). Residues 82 to 105 (KFGFYEVFKKTYADAVGEKADQFR) are Mitochondrial intermembrane-facing. Residues 106-126 (IPIWLAASATAEVIADIALCP) traverse the membrane as a helical segment. Over 127–162 (NEAVRIRLVAEPTFAKSPVEAFGKIFKQEGVLGFYK) the chain is Mitochondrial matrix. A helical membrane pass occupies residues 163-179 (GLPPILLKQVPYTMAKF). Residues 180–208 (AVFEFTAENVYKGLAASGKPKESLTDGQK) lie on the Mitochondrial intermembrane side of the membrane. The helical transmembrane segment at 209-229 (LSVSLGSGIVAGIVAAIVSQP) threads the bilayer. Residues 230–262 (ADTILSKINQEKTDGGVVKAIGNIMRRLGVRGL) lie on the Mitochondrial matrix side of the membrane. Residues 263–283 (FLGLPTRCFMVGTLTAGQFFI) form a helical membrane-spanning segment. The Mitochondrial intermembrane segment spans residues 284–298 (YDGIKQMLGLTPAKK).

This sequence belongs to the mitochondrial carrier (TC 2.A.29) family.

It localises to the mitochondrion inner membrane. Its function is as follows. Mitochondrial solute carriers shuttle metabolites, nucleotides, and cofactors through the mitochondrial inner membrane. Transports phosphate groups from the cytosol to the mitochondrial matrix. Phosphate is cotransported with H(+). The polypeptide is Mitochondrial substrate carrier family protein N (mcfN) (Dictyostelium discoideum (Social amoeba)).